Consider the following 556-residue polypeptide: 2-succinyl-5-enolpyruvyl-6-hydroxy-3-cyclohexene-1-carboxylate synthase (556 aa).

Belongs to the TPP enzyme family. MenD subfamily. As to quaternary structure, homodimer. Requires Mg(2+) as cofactor. The cofactor is Mn(2+). It depends on thiamine diphosphate as a cofactor.

It carries out the reaction isochorismate + 2-oxoglutarate + H(+) = 5-enolpyruvoyl-6-hydroxy-2-succinyl-cyclohex-3-ene-1-carboxylate + CO2. It functions in the pathway quinol/quinone metabolism; 1,4-dihydroxy-2-naphthoate biosynthesis; 1,4-dihydroxy-2-naphthoate from chorismate: step 2/7. It participates in quinol/quinone metabolism; menaquinone biosynthesis. Its function is as follows. Catalyzes the thiamine diphosphate-dependent decarboxylation of 2-oxoglutarate and the subsequent addition of the resulting succinic semialdehyde-thiamine pyrophosphate anion to isochorismate to yield 2-succinyl-5-enolpyruvyl-6-hydroxy-3-cyclohexene-1-carboxylate (SEPHCHC). In Escherichia coli O7:K1 (strain IAI39 / ExPEC), this protein is 2-succinyl-5-enolpyruvyl-6-hydroxy-3-cyclohexene-1-carboxylate synthase.